The sequence spans 67 residues: Protein SlyX homolog (67 aa).

The protein belongs to the SlyX family.

This chain is Protein SlyX homolog, found in Thiobacillus denitrificans (strain ATCC 25259 / T1).